A 195-amino-acid chain; its full sequence is Imidazoleglycerol-phosphate dehydratase (195 aa).

It belongs to the imidazoleglycerol-phosphate dehydratase family.

The protein localises to the cytoplasm. The enzyme catalyses D-erythro-1-(imidazol-4-yl)glycerol 3-phosphate = 3-(imidazol-4-yl)-2-oxopropyl phosphate + H2O. It participates in amino-acid biosynthesis; L-histidine biosynthesis; L-histidine from 5-phospho-alpha-D-ribose 1-diphosphate: step 6/9. This is Imidazoleglycerol-phosphate dehydratase from Geobacillus kaustophilus (strain HTA426).